Consider the following 449-residue polypeptide: Phosphoglucosamine mutase (449 aa).

Ser-104 acts as the Phosphoserine intermediate in catalysis. Mg(2+) contacts are provided by Ser-104, Asp-243, Asp-245, and Asp-247. Position 104 is a phosphoserine (Ser-104).

It belongs to the phosphohexose mutase family. Requires Mg(2+) as cofactor. In terms of processing, activated by phosphorylation.

It carries out the reaction alpha-D-glucosamine 1-phosphate = D-glucosamine 6-phosphate. Catalyzes the conversion of glucosamine-6-phosphate to glucosamine-1-phosphate. The sequence is that of Phosphoglucosamine mutase from Xanthomonas axonopodis pv. citri (strain 306).